Here is a 223-residue protein sequence, read N- to C-terminus: MALSRAKPDELPRDAVVITEDQALKYQWKIITSWDKIGEVWSLRYTPGILSALAAGTGAYINNHYRTKLRLGGHGRLSTYLPIVAVPAIFTMLAHKFFIQRPILLNPLGECPVCIQMRSAAFQTSLGIVYPTILAPFAAFLFATRCYTYRIPSITENPREVFLLWRKFTRPIVPALGTLIGLQALLTMFLTGQEDKQNFKLMLRMREIEHQVEEEHLPQRMDF.

Over 1 to 39 (MALSRAKPDELPRDAVVITEDQALKYQWKIITSWDKIGE) the chain is Mitochondrial matrix. A helical membrane pass occupies residues 40-62 (VWSLRYTPGILSALAAGTGAYIN). Over 63 to 78 (NHYRTKLRLGGHGRLS) the chain is Mitochondrial intermembrane. The chain crosses the membrane as a helical span at residues 79–99 (TYLPIVAVPAIFTMLAHKFFI). Residues 100–123 (QRPILLNPLGECPVCIQMRSAAFQ) lie on the Mitochondrial matrix side of the membrane. The chain crosses the membrane as a helical span at residues 124 to 144 (TSLGIVYPTILAPFAAFLFAT). Over 145-171 (RCYTYRIPSITENPREVFLLWRKFTRP) the chain is Mitochondrial intermembrane. The helical transmembrane segment at 172–192 (IVPALGTLIGLQALLTMFLTG) threads the bilayer. The Mitochondrial matrix portion of the chain corresponds to 193-223 (QEDKQNFKLMLRMREIEHQVEEEHLPQRMDF).

The protein belongs to the TMEM126 family. In terms of assembly, associates with mitochondrial complex I assembly intermediates during its biogenesis.

Its subcellular location is the mitochondrion membrane. In terms of biological role, as part of the MCIA complex, involved in the assembly of the mitochondrial complex I. This chain is Transmembrane protein 126, found in Drosophila melanogaster (Fruit fly).